Here is a 1230-residue protein sequence, read N- to C-terminus: Cullin-associated NEDD8-dissociated protein 1 (1230 aa).

At Ala2 the chain carries N-acetylalanine. 12 HEAT repeats span residues 2-39 (ASASYHISNLLEKMTSSGKDFRFMATNDLMTELQKDSI), 44-81 (DSERKVVKMILKLQEDKNGEVQNLAVKCLGPLVSKVKE), 83-119 (QVETIVDTLCTNMLSDKEQLRDISSIGLKTVIGELPP), 131-165 (CKKITGRLTSAIAKQEDVSVQLEALDIMADMLSRQ), 171-208 (NFHPSILTCLLPQLTSPRLAVRKRTIIALGHLVMSCGN), 210-247 (VFVGLIEHLLSELSKNDSMSTTRTYIQCIAAISRQAGH), 248-282 (RIGEYLEKIIPLVVKFCNVDDDELREYCIQAFESF), 289-366 (EVYP…TRHE), 370-407 (EFYKTVSPALISRFKEREENVKADVFHAYLSLLKQTRP), 424-467 (PLTM…VLPG), 471-510 (QHIPVLVPGIIFSLNDESSSSNLKIDALSCLYVILCNHSP), and 515-552 (PHVQALVPPVVACVGDPFYKITSEALLVTQQLVKVIRP). At Lys55 the chain carries N6-acetyllysine. The disordered stretch occupies residues 315–343 (DEDEDENAMDADGGDDDDQGSDDEYSDDG). Position 335 is a phosphoserine (Ser335). Phosphoserine is present on Ser558. HEAT repeat units follow at residues 563-602 (PYIKDVFTCTIKRLKAADIDQDVKERAISCMGQIICNLGD), 606-643 (SDLPNTLQIFLERLKNEITRLTTVKALTLIAGSPLKID), 646-683 (PVLGEGVPILASFLRKNQRALKLGTLSALDILIKNYSD), 688-725 (AMIDAVLDELPPLISESDMHVSQMAISFLTTLAKVYPS), 729-768 (KISGSILNELIGLVRSPLLQGGALSAMLDFFQALVVTGTN), 770-808 (LGYMDLLRMLTGPVYSQSTALTHKQSYYSIAKCVAALTR), 809-845 (ACPKEGPAVVGQFIQDVKNSRSTDSIRLLALLSLGEV), 852-889 (SGQLELKSVILEAFSSPSEEVKSAASYALGSISVGNLP), 890-927 (EYLPFVLQEITSQPKRQYLLLHSLKEIISSASVVGLKP), 928-960 (YVENIWALLLKHCECAEEGTRNVVAECLGKLTL), 961-998 (IDPETLLPRLKGYLISGSSYARSSVVTAVKFTISDHPQ), 1002-1039 (PLLKNCIGDFLKTLEDPDLNVRRVALVTFNSAAHNKPS), 1043-1097 (DLLD…DSCL), 1099-1133 (RLDIFEFLNHVEDGLKDHYDIKMLTFLMLVRLSTL), and 1140-1189 (QRLD…IPEA). Residue Lys971 is modified to N6-acetyllysine.

The protein belongs to the CAND family. Interacts with TBP. Part of a complex that contains CUL1 and RBX1. Interacts with unneddylated cullins: interacts with CUL1, CUL2, CUL3, CUL4A, CUL4B and CUL5. Does not bind neddylated CUL1. Interaction with cullins is abolished in presence of COMMD1, which antagonizes with CAND1 for interacting with cullins. Interacts with ERCC6. Interacts with DCUN1D1, DCUN1D2, DCUN1D3, DCUN1D4 and DCUN1D5; these interactions are bridged by cullins and strongly inhibits the neddylation of cullins.

It is found in the cytoplasm. The protein localises to the nucleus. Its function is as follows. Key assembly factor of SCF (SKP1-CUL1-F-box protein) E3 ubiquitin ligase complexes that promotes the exchange of the substrate-recognition F-box subunit in SCF complexes, thereby playing a key role in the cellular repertoire of SCF complexes. Acts as a F-box protein exchange factor. The exchange activity of CAND1 is coupled with cycles of neddylation conjugation: in the deneddylated state, cullin-binding CAND1 binds CUL1-RBX1, increasing dissociation of the SCF complex and promoting exchange of the F-box protein. Probably plays a similar role in other cullin-RING E3 ubiquitin ligase complexes. The sequence is that of Cullin-associated NEDD8-dissociated protein 1 (CAND1) from Pongo abelii (Sumatran orangutan).